A 106-amino-acid chain; its full sequence is MKSYAIIQTGSKQYQVSEGDIIDVELLDGVSEGQEIVFDQVLFTFDGSKVSLGTPTVKNAVVKGELLSRVRGEKVIAYKYKRRKNYHRKIGHRQNYLRVKISNLVM.

This sequence belongs to the bacterial ribosomal protein bL21 family. In terms of assembly, part of the 50S ribosomal subunit. Contacts protein L20.

Functionally, this protein binds to 23S rRNA in the presence of protein L20. This is Large ribosomal subunit protein bL21 from Chlamydia abortus (strain DSM 27085 / S26/3) (Chlamydophila abortus).